The sequence spans 424 residues: O-methyltransferase aunD (424 aa).

Asp275 contacts S-adenosyl-L-methionine. The active-site Proton acceptor is His326.

This sequence belongs to the class I-like SAM-binding methyltransferase superfamily. Cation-independent O-methyltransferase family.

The protein operates within secondary metabolite biosynthesis. In terms of biological role, O-methyltransferase; part of the gene cluster that mediates the biosynthesis of aurasperone B, a dimeric gamma-naphthopyrone. The first step in the biosynthesis of aurasperone B is the production of gamma-naphthopyrone precursor YWA1 by the non-reducing polyketide synthase albA, via condensation of one acetyl-CoA starter unit with 6 malonyl-CoA units. YWA1 is then methylated by aunE at position C-6 to yield foncesin which is further methylated at position C-8 by aunD to produce fonsecin B. A key enzyme in the biosynthetic pathway is the cytochrome P450 monooxygenase aunB which catalyzes the oxidative dimerization of fonsecin B to aurasperone B. AunB also catalyzes the oxidative dimerization of rubrofusarin B into aurasperone A. This is O-methyltransferase aunD from Aspergillus niger (strain ATCC 1015 / CBS 113.46 / FGSC A1144 / LSHB Ac4 / NCTC 3858a / NRRL 328 / USDA 3528.7).